The primary structure comprises 621 residues: Membrane protein insertase YidC (621 aa).

The next 6 helical transmembrane spans lie at 1–21 (MDKNTLVGFALIGAVVIGFSI), 363–383 (GWGLSMGVVLLLMTIIVKVLV), 436–456 (MGGCLPMLIQMPVFMALFFFV), 486–506 (IPLLGNHLSLFCLLFSITNIL), 527–547 (LMMYIMPVMFIFIFNGYSSGL), and 549–569 (YYYFISGLIGILTMVILRKTT).

Belongs to the OXA1/ALB3/YidC family. Type 1 subfamily. As to quaternary structure, interacts with the Sec translocase complex via SecD. Specifically interacts with transmembrane segments of nascent integral membrane proteins during membrane integration.

It is found in the cell inner membrane. In terms of biological role, required for the insertion and/or proper folding and/or complex formation of integral membrane proteins into the membrane. Involved in integration of membrane proteins that insert both dependently and independently of the Sec translocase complex, as well as at least some lipoproteins. Aids folding of multispanning membrane proteins. In Phocaeicola vulgatus (strain ATCC 8482 / DSM 1447 / JCM 5826 / CCUG 4940 / NBRC 14291 / NCTC 11154) (Bacteroides vulgatus), this protein is Membrane protein insertase YidC.